Here is an 81-residue protein sequence, read N- to C-terminus: Cytochrome b559 subunit alpha (81 aa).

A helical membrane pass occupies residues 21–35; the sequence is VIHSITIPMLFIAGW. Position 23 (H23) interacts with heme.

It belongs to the PsbE/PsbF family. Heterodimer of an alpha subunit and a beta subunit. PSII is composed of 1 copy each of membrane proteins PsbA, PsbB, PsbC, PsbD, PsbE, PsbF, PsbH, PsbI, PsbJ, PsbK, PsbL, PsbM, PsbT, PsbX, PsbY, PsbZ, Psb30/Ycf12, peripheral proteins PsbO, CyanoQ (PsbQ), PsbU, PsbV and a large number of cofactors. It forms dimeric complexes. Heme b serves as cofactor.

It localises to the cellular thylakoid membrane. Its function is as follows. This b-type cytochrome is tightly associated with the reaction center of photosystem II (PSII). PSII is a light-driven water:plastoquinone oxidoreductase that uses light energy to abstract electrons from H(2)O, generating O(2) and a proton gradient subsequently used for ATP formation. It consists of a core antenna complex that captures photons, and an electron transfer chain that converts photonic excitation into a charge separation. The chain is Cytochrome b559 subunit alpha from Rippkaea orientalis (strain PCC 8801 / RF-1) (Cyanothece sp. (strain PCC 8801)).